The sequence spans 423 residues: Diels-Alderase cheD (423 aa).

The signal sequence occupies residues Met-1–Ala-18. Residues Asn-84 and Asn-132 are each glycosylated (N-linked (GlcNAc...) asparagine).

This sequence belongs to the Diels-Alderase family.

It participates in secondary metabolite biosynthesis. Diels-Alderase; part of the gene cluster that mediates the biosynthesis of chaetoglobosin A which has a unique inhibitory activity against actin polymerization in mammalian cells. Chaetoglobosin A and its intermediates are involved in the morphological differentiation of C.globosum. The first step of the pathway is the synthesis of prochaetoglobosin I via condensation of one acetyl-CoA, 8 malonyl-CoA, and a L-tryptophan molecule by the PKS-NRPS hybrid synthetase cheA, followed by reduction of backbone double bond to install desired geometry by the enoyl reductase cheB. Further multiple oxidation steps performed by the cytochrome P450 monooxygenases cheE and cheG, as well as by the FAD-linked oxidoreductase cheF, lead to the formation of chaetoglobosin A. Depending on the order of action of these reductases, distinct intermediates can be identified. Within the pathway, the cytochrome P450 monooxygenase cheE catalyzes a stereospecific epoxidation on prochaetoglobosin I, cytoglobosin D, and chaetoglobosin J intermediates. The FAD-linked oxidoreductase cheF performs dehydrogenation of the C-20 hydroxyl groups in the 20-dihyrochaetoglobosin A and cytoglobosin D intermediates. Finally, the cytochrome P450 monooxygenase cheG can catalyze the stereospecific dihydroxylation of prochaetoglobosin I and prochaetoglobosin IV at C-19 and C-20, respectively. The Diels-Alderase cheD may play a role in the post-PKS-NRPS biosynthetic steps catalyzing Diels-Alder cyclization. The polypeptide is Diels-Alderase cheD (Chaetomium globosum (strain ATCC 6205 / CBS 148.51 / DSM 1962 / NBRC 6347 / NRRL 1970) (Soil fungus)).